A 392-amino-acid chain; its full sequence is S-adenosylmethionine synthase (392 aa).

An ATP-binding site is contributed by H17. A Mg(2+)-binding site is contributed by D19. E45 provides a ligand contact to K(+). L-methionine is bound by residues E58 and Q102. A flexible loop region spans residues 102 to 112 (QSADIAQGVDA). Residues 169-171 (DAK), 235-236 (KF), D244, 250-251 (RK), A267, and K271 contribute to the ATP site. D244 lines the L-methionine pocket. L-methionine is bound at residue K275.

This sequence belongs to the AdoMet synthase family. Homotetramer; dimer of dimers. Mg(2+) serves as cofactor. It depends on K(+) as a cofactor.

The protein resides in the cytoplasm. The enzyme catalyses L-methionine + ATP + H2O = S-adenosyl-L-methionine + phosphate + diphosphate. The protein operates within amino-acid biosynthesis; S-adenosyl-L-methionine biosynthesis; S-adenosyl-L-methionine from L-methionine: step 1/1. Functionally, catalyzes the formation of S-adenosylmethionine (AdoMet) from methionine and ATP. The overall synthetic reaction is composed of two sequential steps, AdoMet formation and the subsequent tripolyphosphate hydrolysis which occurs prior to release of AdoMet from the enzyme. The sequence is that of S-adenosylmethionine synthase from Methylobacterium nodulans (strain LMG 21967 / CNCM I-2342 / ORS 2060).